The primary structure comprises 120 residues: NAD(P)H-quinone oxidoreductase subunit 3, chloroplastic (120 aa).

3 helical membrane passes run I9–G29, M64–M84, and V88–S108.

The protein belongs to the complex I subunit 3 family. As to quaternary structure, NDH is composed of at least 16 different subunits, 5 of which are encoded in the nucleus.

Its subcellular location is the plastid. The protein localises to the chloroplast thylakoid membrane. It carries out the reaction a plastoquinone + NADH + (n+1) H(+)(in) = a plastoquinol + NAD(+) + n H(+)(out). It catalyses the reaction a plastoquinone + NADPH + (n+1) H(+)(in) = a plastoquinol + NADP(+) + n H(+)(out). Its function is as follows. NDH shuttles electrons from NAD(P)H:plastoquinone, via FMN and iron-sulfur (Fe-S) centers, to quinones in the photosynthetic chain and possibly in a chloroplast respiratory chain. The immediate electron acceptor for the enzyme in this species is believed to be plastoquinone. Couples the redox reaction to proton translocation, and thus conserves the redox energy in a proton gradient. In Liriodendron tulipifera (Tuliptree), this protein is NAD(P)H-quinone oxidoreductase subunit 3, chloroplastic.